Consider the following 150-residue polypeptide: MKKLLSLVIIVVGIVADQIFKNWIVANIQLGDTEKIWPNVLSLTYIKNDGAAWSSFSGQQWFFLILTPIVLVVALWFLWKKMAQNWYFIGLTLIIAGALGNFIDRIRQGFVVDMFQTEFINFPIFNIADILLSVGFVLLFIAILTDKETK.

Helical transmembrane passes span 5-25, 59-79, and 83-103; these read LSLVIIVVGIVADQIFKNWIV, QQWFFLILTPIVLVVALWFLW, and AQNWYFIGLTLIIAGALGNFI. Residues aspartate 113 and aspartate 129 contribute to the active site. A helical transmembrane segment spans residues 124-144; the sequence is IFNIADILLSVGFVLLFIAIL.

It belongs to the peptidase A8 family.

It localises to the cell membrane. It catalyses the reaction Release of signal peptides from bacterial membrane prolipoproteins. Hydrolyzes -Xaa-Yaa-Zaa-|-(S,diacylglyceryl)Cys-, in which Xaa is hydrophobic (preferably Leu), and Yaa (Ala or Ser) and Zaa (Gly or Ala) have small, neutral side chains.. Its pathway is protein modification; lipoprotein biosynthesis (signal peptide cleavage). Functionally, this protein specifically catalyzes the removal of signal peptides from prolipoproteins. The polypeptide is Lipoprotein signal peptidase (Lactococcus lactis subsp. lactis (strain IL1403) (Streptococcus lactis)).